The sequence spans 453 residues: Chromosomal replication initiator protein DnaA (453 aa).

Positions 1 to 71 are domain I, interacts with DnaA modulators; the sequence is MSEKEIWEKV…QAILFDVVGY (71 aa). The interval 71–114 is domain II; sequence YEVKPHFITTEELANYSNNETATPKETTKPSTETTEDNHVLGRE. The domain III, AAA+ region stretch occupies residues 115–331; that stretch reads QFNAHNTFDT…GALTRLLAYS (217 aa). Glycine 159, glycine 161, lysine 162, and threonine 163 together coordinate ATP. Positions 332-453 are domain IV, binds dsDNA; that stretch reads QLLGKPITTE…ENLEKEIRNV (122 aa).

This sequence belongs to the DnaA family. In terms of assembly, oligomerizes as a right-handed, spiral filament on DNA at oriC.

The protein localises to the cytoplasm. In terms of biological role, plays an essential role in the initiation and regulation of chromosomal replication. ATP-DnaA binds to the origin of replication (oriC) to initiate formation of the DNA replication initiation complex once per cell cycle. Binds the DnaA box (a 9 base pair repeat at the origin) and separates the double-stranded (ds)DNA. Forms a right-handed helical filament on oriC DNA; dsDNA binds to the exterior of the filament while single-stranded (ss)DNA is stabiized in the filament's interior. The ATP-DnaA-oriC complex binds and stabilizes one strand of the AT-rich DNA unwinding element (DUE), permitting loading of DNA polymerase. After initiation quickly degrades to an ADP-DnaA complex that is not apt for DNA replication. Binds acidic phospholipids. This chain is Chromosomal replication initiator protein DnaA, found in Staphylococcus aureus (strain bovine RF122 / ET3-1).